The chain runs to 231 residues: ATP phosphoribosyltransferase (231 aa).

The protein belongs to the ATP phosphoribosyltransferase family. Short subfamily. As to quaternary structure, heteromultimer composed of HisG and HisZ subunits.

The protein localises to the cytoplasm. The catalysed reaction is 1-(5-phospho-beta-D-ribosyl)-ATP + diphosphate = 5-phospho-alpha-D-ribose 1-diphosphate + ATP. The protein operates within amino-acid biosynthesis; L-histidine biosynthesis; L-histidine from 5-phospho-alpha-D-ribose 1-diphosphate: step 1/9. Its function is as follows. Catalyzes the condensation of ATP and 5-phosphoribose 1-diphosphate to form N'-(5'-phosphoribosyl)-ATP (PR-ATP). Has a crucial role in the pathway because the rate of histidine biosynthesis seems to be controlled primarily by regulation of HisG enzymatic activity. The sequence is that of ATP phosphoribosyltransferase from Brucella suis (strain ATCC 23445 / NCTC 10510).